Reading from the N-terminus, the 562-residue chain is Dihydroxy-acid dehydratase (562 aa).

Asp-78 contributes to the Mg(2+) binding site. Cys-119 provides a ligand contact to [2Fe-2S] cluster. Mg(2+) contacts are provided by Asp-120 and Lys-121. Residue Lys-121 is modified to N6-carboxylysine. Cys-192 contacts [2Fe-2S] cluster. Residue Glu-449 participates in Mg(2+) binding. The Proton acceptor role is filled by Ser-475.

This sequence belongs to the IlvD/Edd family. In terms of assembly, homodimer. It depends on [2Fe-2S] cluster as a cofactor. Requires Mg(2+) as cofactor.

The catalysed reaction is (2R)-2,3-dihydroxy-3-methylbutanoate = 3-methyl-2-oxobutanoate + H2O. It carries out the reaction (2R,3R)-2,3-dihydroxy-3-methylpentanoate = (S)-3-methyl-2-oxopentanoate + H2O. The protein operates within amino-acid biosynthesis; L-isoleucine biosynthesis; L-isoleucine from 2-oxobutanoate: step 3/4. It participates in amino-acid biosynthesis; L-valine biosynthesis; L-valine from pyruvate: step 3/4. Its function is as follows. Functions in the biosynthesis of branched-chain amino acids. Catalyzes the dehydration of (2R,3R)-2,3-dihydroxy-3-methylpentanoate (2,3-dihydroxy-3-methylvalerate) into 2-oxo-3-methylpentanoate (2-oxo-3-methylvalerate) and of (2R)-2,3-dihydroxy-3-methylbutanoate (2,3-dihydroxyisovalerate) into 2-oxo-3-methylbutanoate (2-oxoisovalerate), the penultimate precursor to L-isoleucine and L-valine, respectively. This chain is Dihydroxy-acid dehydratase, found in Aliarcobacter butzleri (strain RM4018) (Arcobacter butzleri).